The chain runs to 104 residues: Ig kappa chain V region XP-1 (104 aa).

The interval 1 to 24 is framework-1; sequence ADIVMTQTPASVSEPVGGTVTIKC. Residues 25-35 form a complementarity-determining-1 region; sequence QASQSIFBBLA. The segment at 36–49 is framework-2; it reads WYQKPGZPPKGLLY. Residues 50–56 are complementarity-determining-2; the sequence is TBYTLAS. The segment at 57–88 is framework-3; the sequence is GVSSRFSGGGSGTBFTLTISDLECABAATYYC. The complementarity-determining-3 stretch occupies residues 89–100; sequence EXTGVSZBXBKG. Residues 101 to 104 are framework-4; that stretch reads FGGG.

The chain is Ig kappa chain V region XP-1 from Oryctolagus cuniculus (Rabbit).